Consider the following 79-residue polypeptide: Conotoxin 1 (79 aa).

The first 22 residues, 1–22, serve as a signal peptide directing secretion; sequence MKLTCVLIITVLFLTASQLITA. Residues 23–46 constitute a propeptide that is removed on maturation; it reads DYSRDQRQYRAVRLGDEMRTFKGA. Disulfide bonds link Cys49–Cys62, Cys56–Cys67, and Cys61–Cys77.

This sequence belongs to the conotoxin O1 superfamily. As to expression, expressed by the venom duct.

It is found in the secreted. In Conus vexillum (Flag cone), this protein is Conotoxin 1.